The sequence spans 235 residues: Phosphoribosylaminoimidazole-succinocarboxamide synthase (235 aa).

It belongs to the SAICAR synthetase family.

It carries out the reaction 5-amino-1-(5-phospho-D-ribosyl)imidazole-4-carboxylate + L-aspartate + ATP = (2S)-2-[5-amino-1-(5-phospho-beta-D-ribosyl)imidazole-4-carboxamido]succinate + ADP + phosphate + 2 H(+). It functions in the pathway purine metabolism; IMP biosynthesis via de novo pathway; 5-amino-1-(5-phospho-D-ribosyl)imidazole-4-carboxamide from 5-amino-1-(5-phospho-D-ribosyl)imidazole-4-carboxylate: step 1/2. This is Phosphoribosylaminoimidazole-succinocarboxamide synthase from Streptococcus pneumoniae (strain 70585).